The primary structure comprises 88 residues: Small ribosomal subunit protein bS20 (88 aa).

The span at 1-21 (MANSKSAKKRALQSEKRRQHN) shows a compositional bias: basic residues. Residues 1–26 (MANSKSAKKRALQSEKRRQHNASRSS) are disordered.

This sequence belongs to the bacterial ribosomal protein bS20 family.

Functionally, binds directly to 16S ribosomal RNA. The polypeptide is Small ribosomal subunit protein bS20 (Shewanella halifaxensis (strain HAW-EB4)).